The chain runs to 330 residues: Beta-ketoacyl-[acyl-carrier-protein] synthase III (330 aa).

Active-site residues include Cys-116 and His-257. Positions 258 to 262 are ACP-binding; that stretch reads QANQR. Asn-287 is a catalytic residue.

It belongs to the thiolase-like superfamily. FabH family. In terms of assembly, homodimer.

The protein resides in the cytoplasm. It carries out the reaction malonyl-[ACP] + acetyl-CoA + H(+) = 3-oxobutanoyl-[ACP] + CO2 + CoA. Its pathway is lipid metabolism; fatty acid biosynthesis. In terms of biological role, catalyzes the condensation reaction of fatty acid synthesis by the addition to an acyl acceptor of two carbons from malonyl-ACP. Catalyzes the first condensation reaction which initiates fatty acid synthesis and may therefore play a role in governing the total rate of fatty acid production. Possesses both acetoacetyl-ACP synthase and acetyl transacylase activities. Its substrate specificity determines the biosynthesis of branched-chain and/or straight-chain of fatty acids. In Synechocystis sp. (strain ATCC 27184 / PCC 6803 / Kazusa), this protein is Beta-ketoacyl-[acyl-carrier-protein] synthase III.